The chain runs to 618 residues: MLPEHLARISRRYVILLALVGLYVCYLFLPRWLVLACGLRRTLLSCHTCFLCEIVIPSHSTQHTSRNDKVKAWCLTSEYSLIGWYAFSGEMCAVINEWKGGEGFGIGRCFFKWRSDDVWRVEVVREYDWYGRIISRSIRDGAGSYRYQSRSDRDRSCFHHVFHHCPSAFYHLACANLVRSCGDLRWIGMANLNLYTVTAICVRWRVTKPLTGARITAVLCTRALEFIWYRLKRVRPASLFHQLFHHLRRPFWNLLRQTGCPAVAGRTRIGMAKSYICLVLPRNAAVGGGCLDDIIDPQNNKQSPGSSEMEAAFAVTKAAANRASCRKIPMLHIGVSWGCRSIRRIPEFIYVIVLLILSTKHKQIAVLNRPKDRCEASVGIILDPREFVIMSWLFPVSNSVIRSQFHTTYRAGKHKVNTWCSHLIALASLRGFINFSVIYHGSSLNENYQKSQDAGEHAVLLLYSPGPMAQQHCGIVAQEGGDVCGGLYARACLGDRSLTVQRLSDYRVSYQRLRLLEQLRAGRILATALGAKLPRRDAACAGCVAHGVGGDVWRRVLVRAACWRQISYSAAIVNLMWWRSHDDEYSYYARLDCSSRLFCWGHVRKIPEWVICHSFLYY.

In terms of biological role, bacterial hemolysins are exotoxins that attack blood cell membranes and cause cell rupture by mechanisms not clearly defined. The sequence is that of Citrolysin protein 1 from Citrobacter freundii.